Here is a 1163-residue protein sequence, read N- to C-terminus: DNA-directed RNA polymerase subunit beta 2 (1163 aa).

It belongs to the RNA polymerase beta chain family. As to quaternary structure, the RNAP catalytic core consists of 2 alpha, 1 beta, 1 beta' and 1 omega subunit. When a sigma factor is associated with the core the holoenzyme is formed, which can initiate transcription.

The catalysed reaction is RNA(n) + a ribonucleoside 5'-triphosphate = RNA(n+1) + diphosphate. DNA-dependent RNA polymerase catalyzes the transcription of DNA into RNA using the four ribonucleoside triphosphates as substrates. In Nocardia farcinica (strain IFM 10152), this protein is DNA-directed RNA polymerase subunit beta 2.